Here is a 227-residue protein sequence, read N- to C-terminus: MAYPFQLGLQDATSPIMEELLHFHDHTLMIVFLISSLVLYIISLMLTTKLTHTSTMDAQEVETVWTILPAIILILIALPSLRILYMMDEINNPSLTVKTVGHQWYWSYEYTDYEDLNFDSYMIPTQELKPGELRLLEVDNRVVLPMEMTVRMLISSEDVLHSWAVPSLGLKTDAIPGRLNQTTLMAMRPGLYYGQCSEICGSNHSFMPIVLEMVPLSYFETWSAVMV.

The Mitochondrial intermembrane portion of the chain corresponds to 1-14; that stretch reads MAYPFQLGLQDATS. Residues 15 to 45 form a helical membrane-spanning segment; it reads PIMEELLHFHDHTLMIVFLISSLVLYIISLM. Topologically, residues 46 to 59 are mitochondrial matrix; it reads LTTKLTHTSTMDAQ. The chain crosses the membrane as a helical span at residues 60–87; that stretch reads EVETVWTILPAIILILIALPSLRILYMM. At 88 to 227 the chain is on the mitochondrial intermembrane side; that stretch reads DEINNPSLTV…YFETWSAVMV (140 aa). Positions 161, 196, 198, 200, 204, and 207 each coordinate Cu cation. Glu198 is a Mg(2+) binding site. At Tyr218 the chain carries Phosphotyrosine.

It belongs to the cytochrome c oxidase subunit 2 family. Component of the cytochrome c oxidase (complex IV, CIV), a multisubunit enzyme composed of 14 subunits. The complex is composed of a catalytic core of 3 subunits MT-CO1, MT-CO2 and MT-CO3, encoded in the mitochondrial DNA, and 11 supernumerary subunits COX4I, COX5A, COX5B, COX6A, COX6B, COX6C, COX7A, COX7B, COX7C, COX8 and NDUFA4, which are encoded in the nuclear genome. The complex exists as a monomer or a dimer and forms supercomplexes (SCs) in the inner mitochondrial membrane with NADH-ubiquinone oxidoreductase (complex I, CI) and ubiquinol-cytochrome c oxidoreductase (cytochrome b-c1 complex, complex III, CIII), resulting in different assemblies (supercomplex SCI(1)III(2)IV(1) and megacomplex MCI(2)III(2)IV(2)). Found in a complex with TMEM177, COA6, COX18, COX20, SCO1 and SCO2. Interacts with TMEM177 in a COX20-dependent manner. Interacts with COX20. Interacts with COX16. Requires Cu cation as cofactor.

The protein resides in the mitochondrion inner membrane. The catalysed reaction is 4 Fe(II)-[cytochrome c] + O2 + 8 H(+)(in) = 4 Fe(III)-[cytochrome c] + 2 H2O + 4 H(+)(out). Its function is as follows. Component of the cytochrome c oxidase, the last enzyme in the mitochondrial electron transport chain which drives oxidative phosphorylation. The respiratory chain contains 3 multisubunit complexes succinate dehydrogenase (complex II, CII), ubiquinol-cytochrome c oxidoreductase (cytochrome b-c1 complex, complex III, CIII) and cytochrome c oxidase (complex IV, CIV), that cooperate to transfer electrons derived from NADH and succinate to molecular oxygen, creating an electrochemical gradient over the inner membrane that drives transmembrane transport and the ATP synthase. Cytochrome c oxidase is the component of the respiratory chain that catalyzes the reduction of oxygen to water. Electrons originating from reduced cytochrome c in the intermembrane space (IMS) are transferred via the dinuclear copper A center (CU(A)) of subunit 2 and heme A of subunit 1 to the active site in subunit 1, a binuclear center (BNC) formed by heme A3 and copper B (CU(B)). The BNC reduces molecular oxygen to 2 water molecules using 4 electrons from cytochrome c in the IMS and 4 protons from the mitochondrial matrix. This is Cytochrome c oxidase subunit 2 (MT-CO2) from Lycalopex sechurae (Sechuran desert fox).